Reading from the N-terminus, the 121-residue chain is MARIAGIDLPRDKRVEIALTYIYGIGLTRAQNILAKTGVNPDIRVKDLEDGDVQKLRAATESFTIEGDLRRQEGMALKRLQDIGCLRGRRHRMSLPVRGQRTRTNARTRRGSRKTVAGRKK.

The interval 91–121 (HRMSLPVRGQRTRTNARTRRGSRKTVAGRKK) is disordered. Over residues 100 to 121 (QRTRTNARTRRGSRKTVAGRKK) the composition is skewed to basic residues.

Belongs to the universal ribosomal protein uS13 family. In terms of assembly, part of the 30S ribosomal subunit. Forms a loose heterodimer with protein S19. Forms two bridges to the 50S subunit in the 70S ribosome.

Its function is as follows. Located at the top of the head of the 30S subunit, it contacts several helices of the 16S rRNA. In the 70S ribosome it contacts the 23S rRNA (bridge B1a) and protein L5 of the 50S subunit (bridge B1b), connecting the 2 subunits; these bridges are implicated in subunit movement. Contacts the tRNAs in the A and P-sites. The protein is Small ribosomal subunit protein uS13 of Prochlorococcus marinus (strain SARG / CCMP1375 / SS120).